The sequence spans 540 residues: uncharacterized protein (540 aa).

ABC transporter domains are found at residues 2–252 (IAVN…KLSQ) and 320–537 (LRVE…LTEL). An ATP-binding site is contributed by 34-41 (GANGAGKS).

The protein belongs to the ABC transporter superfamily.

This is an uncharacterized protein from Bacillus subtilis (strain 168).